The following is a 146-amino-acid chain: Hut operon positive regulatory protein (146 aa).

Belongs to the HutP family. In terms of assembly, homohexamer.

Its function is as follows. Antiterminator that binds to cis-acting regulatory sequences on the mRNA in the presence of histidine, thereby suppressing transcription termination and activating the hut operon for histidine utilization. This is Hut operon positive regulatory protein from Bacillus cereus (strain ZK / E33L).